We begin with the raw amino-acid sequence, 635 residues long: Biosynthetic arginine decarboxylase (635 aa).

Lys100 bears the N6-(pyridoxal phosphate)lysine mark. 282-292 (VDIGGGLGVDY) provides a ligand contact to substrate.

This sequence belongs to the Orn/Lys/Arg decarboxylase class-II family. SpeA subfamily. The cofactor is Mg(2+). Pyridoxal 5'-phosphate is required as a cofactor.

The enzyme catalyses L-arginine + H(+) = agmatine + CO2. Its pathway is amine and polyamine biosynthesis; agmatine biosynthesis; agmatine from L-arginine: step 1/1. Its function is as follows. Catalyzes the biosynthesis of agmatine from arginine. The chain is Biosynthetic arginine decarboxylase from Geobacter metallireducens (strain ATCC 53774 / DSM 7210 / GS-15).